Reading from the N-terminus, the 198-residue chain is MIVLSVGSASSSPIVVVFSVALLLFYFSETSLGAPCPINGLPIVRNISDLPQDNYGRPGLSHMTVAGSVLHGMKEVEIWLQTFAPGSETPIHRHSCEEVFVVLKGSGTLYLAETHGNFPGKPIEFPIFANSTIHIPINDAHQVKNTGHEDLQVLVIISRPPIKIFIYEDWFMPHTAARLKFPYYWDEQCIQESQKDEL.

The N-terminal stretch at M1 to G33 is a signal peptide. A disulfide bridge connects residues C36 and C189. The Zn(2+) site is built by H92, H94, and E98. N-linked (GlcNAc...) asparagine glycosylation is present at N130. H141 is a Zn(2+) binding site. Residues K195 to L198 carry the Prevents secretion from ER motif.

As to quaternary structure, homodimer. May interact with the GPI-anchored plasma membrane protein SKU5 and its family members. Interacts with TMK1 (via extracellular domain). Glycosylated. Post-translationally, ubiquitinated by RMA2, leading to proteasomal degradation.

Its subcellular location is the endoplasmic reticulum lumen. The protein localises to the cell membrane. In terms of biological role, auxin receptor that controls cell elongation and cell division. Involved in embryonic morphogenesis. Acts on the cell cycle, endocycle, cell plate formation, and cell expansion and contributes to the control of auxin-related gene expression. Controls root meristem size and mediates auxin responsiveness. Involved in activation of ROP GTPases in response to auxin and regulation of clathrin-mediated endocytosis in roots. Acts as a positive factor in clathrin recruitment to the plasma membrane, thereby promoting endocytosis. Upon auxin binding, restricts the internalization of PIN proteins by inhibiting clathrin-mediated endocytosis. Promotes auxin-triggered phosphorylation status modulation of RAF-like kinases (e.g. RAF20 and RAF24). Involved in the regulation of polar auxin transport. Behaves as a negative regulator of the SCF(TIR1/AFB) signaling pathway, protecting AUX/IAA repressors from degradation. Regulates the expression of cell wall remodeling genes via an SCF(TIR1/AFB)-dependent pathway. Involved in the modulation of hemicellulose xyloglucan structure. Required for rapid auxin-mediated re-orientation of microtubules to regulate cell elongation in roots and dark-grown hypocotyls as well as asymmetric growth during gravitropic responses. Involved in the shade avoidance response. Forms with TMK1 a cell surface auxin perception complex that activates ROP signaling pathways. ABP1 sensing of auxin is important for the ABP1-TMK1 complex formation. Interacts functionally with phytochrome to regulate growth. The polypeptide is Auxin-binding protein 1 (Arabidopsis thaliana (Mouse-ear cress)).